The primary structure comprises 165 residues: NADH-ubiquinone oxidoreductase chain 6 (165 aa).

The next 4 helical transmembrane spans lie at 1–21, 47–67, 83–103, and 130–150; these read MVVY…FYSL, SFVP…VFPY, GEVV…FDNF, and GVLV…ALII.

It belongs to the complex I subunit 6 family.

It localises to the mitochondrion membrane. The catalysed reaction is a ubiquinone + NADH + 5 H(+)(in) = a ubiquinol + NAD(+) + 4 H(+)(out). Core subunit of the mitochondrial membrane respiratory chain NADH dehydrogenase (Complex I) that is believed to belong to the minimal assembly required for catalysis. Complex I functions in the transfer of electrons from NADH to the respiratory chain. The immediate electron acceptor for the enzyme is believed to be ubiquinone. This Strongylocentrotus purpuratus (Purple sea urchin) protein is NADH-ubiquinone oxidoreductase chain 6 (ND6).